Here is a 475-residue protein sequence, read N- to C-terminus: MSPQTETKASVGFKAGVKDYKLTYHTPDYQTKDTDILAAFRVTPQPGVPPEEAGAAVAAESSTGTWTTVWTDGLTSLDRYKGRCYHIEPVAGEENQFIAYVAYPLDLFEEGSVTNMFTSIVGNVFGFKALRALRLEDLRIPTSYSKTFQGPPHGIQVERDKLNKYGRPLLGCTIKPKLGLSAKNYGRAVYECLRGGLDFTKDDENVNSQPFMRWRDRFVFCAEAIYKAQAETGEIKGHYLNATAGTCEEMIKRAVFARELGVPIVMHDYLTGGFTANTSLAHYCRDNGLLLHIHRAMHAVIDRQKNHGIHFRVLAKALRMSGGDHIHAGTVVGKLEGEREITLGFVDLLRDDYIEKDRSRGIYFTQDWVSLPGVLPVASGGIHVWHMPALTEIFGDDSVLQFGGGTLGHPWGNAPGAVANRVALEACVQARNEGRDLAREGNEIIREAAKWSPELAAACEVWKEIKFEFPAMDTL.

A propeptide spanning residues 1 to 2 (MS) is cleaved from the precursor. Pro-3 carries the post-translational modification N-acetylproline. Residue Lys-14 is modified to N6,N6,N6-trimethyllysine. Positions 123 and 173 each coordinate substrate. The Proton acceptor role is filled by Lys-175. Lys-177 is a binding site for substrate. The Mg(2+) site is built by Lys-201, Asp-203, and Glu-204. Position 201 is an N6-carboxylysine (Lys-201). His-294 (proton acceptor) is an active-site residue. Residues Arg-295, His-327, and Ser-379 each contribute to the substrate site.

It belongs to the RuBisCO large chain family. Type I subfamily. In terms of assembly, heterohexadecamer of 8 large chains and 8 small chains; disulfide-linked. The disulfide link is formed within the large subunit homodimers. Requires Mg(2+) as cofactor. In terms of processing, the disulfide bond which can form in the large chain dimeric partners within the hexadecamer appears to be associated with oxidative stress and protein turnover.

Its subcellular location is the plastid. It localises to the chloroplast. It catalyses the reaction 2 (2R)-3-phosphoglycerate + 2 H(+) = D-ribulose 1,5-bisphosphate + CO2 + H2O. The catalysed reaction is D-ribulose 1,5-bisphosphate + O2 = 2-phosphoglycolate + (2R)-3-phosphoglycerate + 2 H(+). Its function is as follows. RuBisCO catalyzes two reactions: the carboxylation of D-ribulose 1,5-bisphosphate, the primary event in carbon dioxide fixation, as well as the oxidative fragmentation of the pentose substrate in the photorespiration process. Both reactions occur simultaneously and in competition at the same active site. This Quercus rubra (Northern red oak) protein is Ribulose bisphosphate carboxylase large chain.